Reading from the N-terminus, the 415-residue chain is Casein kinase I isoform delta (415 aa).

The Protein kinase domain occupies 9 to 277; sequence YRLGRKIGSG…YLRQLFRNLF (269 aa). Residues 15–23 and lysine 38 contribute to the ATP site; that span reads IGSGSFGDI. Aspartate 128 serves as the catalytic Proton acceptor. Basic and acidic residues predominate over residues 301 to 315; that stretch reads AEDAERERREREERL. The segment at 301–415 is disordered; sequence AEDAERERRE…SSGLPSTVHR (115 aa). The interval 317-342 is autoinhibitory; sequence HTRNPAVRGLPSTASGRLRGTQEVTP. Residues 341–352 show a composition bias toward low complexity; sequence TPSTPLTPTSHT. A compositionally biased stretch (polar residues) spans 380 to 415; it reads NVSSSDLTSRQDTSRMSTSQIPSRVTSSGLPSTVHR.

It belongs to the protein kinase superfamily. Monomer. Interacts with per1 and per2. Component of the circadian core oscillator. Post-translationally, autophosphorylated on serine and threonine residues. In terms of tissue distribution, detected in retina photoreceptor cells.

The protein localises to the cytoplasm. Its subcellular location is the nucleus. It catalyses the reaction L-seryl-[protein] + ATP = O-phospho-L-seryl-[protein] + ADP + H(+). It carries out the reaction L-threonyl-[protein] + ATP = O-phospho-L-threonyl-[protein] + ADP + H(+). The catalysed reaction is L-seryl-[tau protein] + ATP = O-phospho-L-seryl-[tau protein] + ADP + H(+). The enzyme catalyses L-threonyl-[tau protein] + ATP = O-phospho-L-threonyl-[tau protein] + ADP + H(+). Exhibits substrate-dependent heparin activation. Casein kinases are operationally defined by their preferential utilization of acidic proteins such as caseins as substrates. Can phosphorylate a large number of proteins. Central component of the circadian clock. May act as a negative regulator of circadian rhythmicity by phosphorylating per1 and per2, which may lead to their degradation. Participates in wnt signaling. Functionally, has no kinase activity. This is Casein kinase I isoform delta (csnk1d) from Xenopus laevis (African clawed frog).